Here is a 135-residue protein sequence, read N- to C-terminus: Sex-regulated protein janus-A (135 aa).

K37 serves as a coordination point for substrate. The active-site Proton acceptor is H63. 104-106 serves as a coordination point for substrate; it reads SQG.

This sequence belongs to the janus family. In terms of tissue distribution, somatic and germline cells. Isoform B is expressed in both sexes and in somatic and germ line cells. Isoform A is expressed in males and is germ line specific.

Functionally, janA and janB regulate somatic sex differentiation. The protein is Sex-regulated protein janus-A (janA) of Drosophila melanogaster (Fruit fly).